A 267-amino-acid chain; its full sequence is Putative F-box protein At5g38810 (267 aa).

Positions arginine 4 to lysine 53 constitute an F-box domain.

The chain is Putative F-box protein At5g38810 from Arabidopsis thaliana (Mouse-ear cress).